A 68-amino-acid polypeptide reads, in one-letter code: Antimicrobial peptide VpCT3 (68 aa).

The signal sequence occupies residues 1 to 23 (MKTQIVILIVAVLVLQLVSQSDA). Leucine 36 carries the leucine amide modification. Residues 37 to 68 (GKRGLKNLDQYNDLFDGEISDADIKFLQDLMR) constitute a propeptide that is removed on maturation.

The protein belongs to the non-disulfide-bridged peptide (NDBP) superfamily. Short antimicrobial peptide (group 4) family. In terms of tissue distribution, expressed by the venom gland.

Its subcellular location is the secreted. It is found in the target cell membrane. Functionally, antimicrobial peptide with weak activity against all bacteria tested (MIC&gt;100 uM) and all yeasts tested (MIC&gt;200 uM). Also provokes weak hemolysis on human erythrocytes (HC(50)=83.7 uM). The sequence is that of Antimicrobial peptide VpCT3 from Mesomexovis punctatus (Scorpion).